A 188-amino-acid chain; its full sequence is UPF0301 protein Mmwyl1_0539 (188 aa).

This sequence belongs to the UPF0301 (AlgH) family.

The sequence is that of UPF0301 protein Mmwyl1_0539 from Marinomonas sp. (strain MWYL1).